A 641-amino-acid polypeptide reads, in one-letter code: Soluble starch synthase 1, chloroplastic/amyloplastic (641 aa).

A chloroplast-targeting transit peptide spans 1-113; sequence MATAAGMGIG…DSIDKTIFVA (113 aa). Positions 62–96 are disordered; that stretch reads TFLVPTSTPPAPTQSPAPAPTPPPLPDSGVGEIEP. Over residues 68 to 87 the composition is skewed to pro residues; that stretch reads STPPAPTQSPAPAPTPPPLP. ADP-alpha-D-glucose is bound at residue lysine 147.

It belongs to the glycosyltransferase 1 family. Bacterial/plant glycogen synthase subfamily. In terms of tissue distribution, leaves and immature seeds.

The protein localises to the plastid. Its subcellular location is the chloroplast. The protein resides in the amyloplast. It carries out the reaction [(1-&gt;4)-alpha-D-glucosyl](n) + ADP-alpha-D-glucose = [(1-&gt;4)-alpha-D-glucosyl](n+1) + ADP + H(+). The protein operates within glycan biosynthesis; starch biosynthesis. Its function is as follows. Involved in starch synthesis in endosperm amyloplasts. Plays a role in the elongation of amylopectin chains. Synthesizes preferentially amylopectin chains with a degree of polymerization (DP) of 7 to 11 by elongating chains with a DP of 4 to 7. Generates distincly chains with a DP of 8 to 12 chains from short chains with a DP of 6 to 7. The sequence is that of Soluble starch synthase 1, chloroplastic/amyloplastic from Oryza sativa subsp. japonica (Rice).